Reading from the N-terminus, the 418-residue chain is Tektin-1 (418 aa).

Coiled-coil stretches lie at residues 21 to 107, 134 to 177, 266 to 308, and 333 to 384; these read KNQY…TLKE, HELI…DLKD, NGLK…DQEG, and AQYR…NTIY.

It belongs to the tektin family. As to quaternary structure, microtubule inner protein component of sperm flagellar doublet microtubules. Ubiquitinated, leading to its degradation. Deubiquitinated by USP16, promoting its stability. In terms of tissue distribution, predominantly expressed in testis. Expressed in airway epithelial cells.

It is found in the cytoplasm. Its subcellular location is the cytoskeleton. The protein localises to the cilium axoneme. It localises to the flagellum axoneme. Functionally, microtubule inner protein (MIP) part of the dynein-decorated doublet microtubules (DMTs) in cilia and flagellar axoneme. Forms filamentous polymers in the walls of ciliary and flagellar microtubules. In Homo sapiens (Human), this protein is Tektin-1 (TEKT1).